The chain runs to 346 residues: MAVYAVTGGAGFLGRYIVKLLISADDVQEIRVIDIVEDPQPITSKVKVINYIQCDINDFDKVREALDGVNLIIHTAALVDVFGKYTDNEIMKVNYYGTQTILAACVDLGIKYLIYTSSMEAIGPNKHGDPFIGHEHTLYDISPGHVYAKSKRMAEQLVMKANNSVIMNGAKLYTCCLRPTGIYGEGDKLTKVFYEQCKQHGNIMYRTVDDDAVHSRVYVGNVAWMHVLAAKYIQYPGSEIKGNAYFCYDYSPSCSYDMFNLLLMKPLGIEQGSRIPRWMLKMYACKNDMKRILFRKPSLLNNYTLKISNTTFEVRTNNAELDFNYSPIFNVDVAFERTRKWLEESE.

Y147 (proton acceptor) is an active-site residue. K151 serves as a coordination point for NAD(+).

The protein belongs to the 3-beta-HSD family.

The catalysed reaction is a 3beta-hydroxy-Delta(5)-steroid + NAD(+) = a 3-oxo-Delta(5)-steroid + NADH + H(+). The enzyme catalyses a 3-oxo-Delta(5)-steroid = a 3-oxo-Delta(4)-steroid. Its pathway is lipid metabolism; steroid biosynthesis. Its function is as follows. Catalyzes the oxidative conversion of Delta(5)-ene-3-beta-hydroxy steroid, and the oxidative conversion of ketosteroids. The 3-beta-HSD enzymatic system plays a crucial role in the biosynthesis of all classes of hormonal steroids. During viral infection, steroid production contributes to virulence by inhibiting the host inflammatory response. The protein is 3 beta-hydroxysteroid dehydrogenase/Delta 5--&gt;4-isomerase (OPG174) of Vaccinia virus (strain Western Reserve) (VACV).